We begin with the raw amino-acid sequence, 101 residues long: Small ribosomal subunit protein uS14 (101 aa).

The protein belongs to the universal ribosomal protein uS14 family. As to quaternary structure, part of the 30S ribosomal subunit. Contacts proteins S3 and S10.

Its function is as follows. Binds 16S rRNA, required for the assembly of 30S particles and may also be responsible for determining the conformation of the 16S rRNA at the A site. The chain is Small ribosomal subunit protein uS14 from Ehrlichia canis (strain Jake).